We begin with the raw amino-acid sequence, 254 residues long: Floral homeotic protein APETALA 1 (254 aa).

The MADS-box domain maps to 3–57 (RGRVQLKRIENKINRQVTFSKRRAGLLKKAHEISVLCDAEVALVVFSHKGKLFEY). A K-box domain is found at 88 to 178 (NTNWSMEYNR…SKQIKEREKI (91 aa)).

Its subcellular location is the nucleus. Its function is as follows. Controls floral meristem identity. Is also required for normal development of sepals and petals. Is required for the transition of an influorescence meristem into a floral meristem. Interacts with LEAFY. The sequence is that of Floral homeotic protein APETALA 1 (AP1) from Sinapis alba (White mustard).